Consider the following 732-residue polypeptide: Catalase-peroxidase (732 aa).

The segment at 1–23 (MSEQSRCPVTGRTADSPATGSGL) is disordered. A cross-link (tryptophyl-tyrosyl-methioninium (Trp-Tyr) (with M-246)) is located at residues 97 to 220 (WHSAGTYRTS…LAAVQMGLIY (124 aa)). The Proton acceptor role is filled by His98. Residues 220 to 246 (YVNPEGPDGKPDPVAAGRDIRETFARM) constitute a cross-link (tryptophyl-tyrosyl-methioninium (Tyr-Met) (with W-97)). Residue His261 coordinates heme b.

The protein belongs to the peroxidase family. Peroxidase/catalase subfamily. As to quaternary structure, homodimer or homotetramer. Heme b serves as cofactor. Formation of the three residue Trp-Tyr-Met cross-link is important for the catalase, but not the peroxidase activity of the enzyme.

It catalyses the reaction H2O2 + AH2 = A + 2 H2O. It carries out the reaction 2 H2O2 = O2 + 2 H2O. In terms of biological role, bifunctional enzyme with both catalase and broad-spectrum peroxidase activity. The protein is Catalase-peroxidase of Prosthecochloris aestuarii (strain DSM 271 / SK 413).